We begin with the raw amino-acid sequence, 125 residues long: Large ribosomal subunit protein bL12 (125 aa).

Belongs to the bacterial ribosomal protein bL12 family. In terms of assembly, homodimer. Part of the ribosomal stalk of the 50S ribosomal subunit. Forms a multimeric L10(L12)X complex, where L10 forms an elongated spine to which 2 to 4 L12 dimers bind in a sequential fashion. Binds GTP-bound translation factors.

Forms part of the ribosomal stalk which helps the ribosome interact with GTP-bound translation factors. Is thus essential for accurate translation. In Helicobacter pylori (strain HPAG1), this protein is Large ribosomal subunit protein bL12.